Here is a 660-residue protein sequence, read N- to C-terminus: Long chain acyl-CoA synthetase 1 (660 aa).

Residue 225–236 (IMYTSGTSGDPK) coordinates ATP. The fatty acid-binding stretch occupies residues 492–516 (DGWFHTGDIGEILPNGVLKIIDRKK).

Belongs to the ATP-dependent AMP-binding enzyme family. Mg(2+) serves as cofactor. In terms of tissue distribution, epidermal-specific expression along the entire stem. In cauline leaves, was expressed over the entire leaf surface, most strongly in trichomes and guard cells, but not in mesophyll cells. In flowers, the expression was detected in the stigma and filaments of the stamens, and in the carpel was expressed specifically in ovaries. In roots, was expressed in primary and lateral roots, but not in the root tips.

Its subcellular location is the endoplasmic reticulum. The catalysed reaction is a long-chain fatty acid + ATP + CoA = a long-chain fatty acyl-CoA + AMP + diphosphate. It functions in the pathway lipid metabolism; fatty acid metabolism. Its function is as follows. Activation of long-chain fatty acids for both synthesis of cellular lipids, and degradation via beta-oxidation. Acts in both the wax and cutin pathways. Preferentially uses palmitate, palmitoleate, linoleate and eicosenoate. Seems to have a specific activity against very long-chain fatty acid (VLCFA) class with acids longer than 24 carbons (C(24)). This is Long chain acyl-CoA synthetase 1 (LACS1) from Arabidopsis thaliana (Mouse-ear cress).